The sequence spans 4545 residues: MLTPPLLLLLPLLSALVSGATMDAPKTCSPKQFACRDQITCISKGWRCDGERDCPDGSDEAPEICPQSKAQRCPPNEHSCLGTELCVPMSRLCNGIQDCMDGSDEGAHCRELRANCSRMGCQHHCVPTPSGPTCYCNSSFQLQADGKTCKDFDECSVYGTCSQLCTNTDGSFTCGCVEGYLLQPDNRSCKAKNEPVDRPPVLLIANSQNILATYLSGAQVSTITPTSTRQTTAMDFSYANETVCWVHVGDSAAQTQLKCARMPGLKGFVDEHTINISLSLHHVEQMAIDWLTGNFYFVDDIDDRIFVCNRNGDTCVTLLDLELYNPKGIALDPAMGKVFFTDYGQIPKVERCDMDGQNRTKLVDSKIVFPHGITLDLVSRLVYWADAYLDYIEVVDYEGKGRQTIIQGILIEHLYGLTVFENYLYATNSDNANTQQKTSVIRVNRFNSTEYQVVTRVDKGGALHIYHQRRQPRVRSHACENDQYGKPGGCSDICLLANSHKARTCRCRSGFSLGSDGKSCKKPEHELFLVYGKGRPGIIRGMDMGAKVPDEHMIPIENLMNPRALDFHAETGFIYFADTTSYLIGRQKIDGTERETILKDGIHNVEGVAVDWMGDNLYWTDDGPKKTISVARLEKAAQTRKTLIEGKMTHPRAIVVDPLNGWMYWTDWEEDPKDSRRGRLERAWMDGSHRDIFVTSKTVLWPNGLSLDIPAGRLYWVDAFYDRIETILLNGTDRKIVYEGPELNHAFGLCHHGNYLFWTEYRSGSVYRLERGVAGAPPTVTLLRSERPPIFEIRMYDAQQQQVGTNKCRVNNGGCSSLCLATPGSRQCACAEDQVLDTDGVTCLANPSYVPPPQCQPGEFACANNRCIQERWKCDGDNDCLDNSDEAPALCHQHTCPSDRFKCENNRCIPNRWLCDGDNDCGNSEDESNATCSARTCPPNQFSCASGRCIPISWTCDLDDDCGDRSDESASCAYPTCFPLTQFTCNNGRCININWRCDNDNDCGDNSDEAGCSHSCSSTQFKCNSGRCIPEHWTCDGDNDCGDYSDETHANCTNQATRPPGGCHSDEFQCRLDGLCIPLRWRCDGDTDCMDSSDEKSCEGVTHVCDPNVKFGCKDSARCISKAWVCDGDSDCEDNSDEENCEALACRPPSHPCANNTSVCLPPDKLCDGKDDCGDGSDEGELCDQCSLNNGGCSHNCSVAPGEGIVCSCPLGMELGSDNHTCQIQSYCAKHLKCSQKCDQNKFSVKCSCYEGWVLEPDGESCRSLDPFKPFIIFSNRHEIRRIDLHKGDYSVLVPGLRNTIALDFHLSQSALYWTDVVEDKIYRGKLLDNGALTSFEVVIQYGLATPEGLAVDWIAGNIYWVESNLDQIEVAKLDGTLRTTLLAGDIEHPRAIALDPRDGILFWTDWDASLPRIEAASMSGAGRRTIHRETGSGGWPNGLTVDYLEKRILWIDARSDAIYSARYDGSGHMEVLRGHEFLSHPFAVTLYGGEVYWTDWRTNTLAKANKWTGHNVTVVQRTNTQPFDLQVYHPSRQPMAPNPCEANGGRGPCSHLCLINYNRTVSCACPHLMKLHKDNTTCYEFKKFLLYARQMEIRGVDLDAPYYNYIISFTVPDIDNVTVLDYDAREQRVYWSDVRTQAIKRAFINGTGVETVVSADLPNAHGLAVDWVSRNLFWTSYDTNKKQINVARLDGSFKNAVVQGLEQPHGLVVHPLRGKLYWTDGDNISMANMDGSNHTLLFSGQKGPVGLAIDFPESKLYWISSGNHTINRCNLDGSELEVIDTMRSQLGKATALAIMGDKLWWADQVSEKMGTCNKADGSGSVVLRNSTTLVMHMKVYDESIQLEHEGTNPCSVNNGDCSQLCLPTSETTRSCMCTAGYSLRSGQQACEGVGSFLLYSVHEGIRGIPLDPNDKSDALVPVSGTSLAVGIDFHAENDTIYWVDMGLSTISRAKRDQTWREDVVTNGIGRVEGIAVDWIAGNIYWTDQGFDVIEVARLNGSFRYVVISQGLDKPRAITVHPEKGYLFWTEWGHYPRIERSRLDGTERVVLVNVSISWPNGISVDYQGGKLYWCDARMDKIERIDLETGENREVVLSSNNMDMFSVSVFEDFIYWSDRTHANGSIKRGCKDNATDSVPLRTGIGVQLKDIKVFNRDRQKGTNVCAVANGGCQQLCLYRGGGQRACACAHGMLAEDGASCREYAGYLLYSERTILKSIHLSDERNLNAPVQPFEDPEHMKNVIALAFDYRAGTSPGTPNRIFFSDIHFGNIQQINDDGSGRTTIVENVGSVEGLAYHRGWDTLYWTSYTTSTITRHTVDQTRPGAFERETVITMSGDDHPRAFVLDECQNLMFWTNWNELHPSIMRAALSGANVLTLIEKDIRTPNGLAIDHRAEKLYFSDATLDKIERCEYDGSHRYVILKSEPVHPFGLAVYGEHIFWTDWVRRAVQRANKYVGSDMKLLRVDIPQQPMGIIAVANDTNSCELSPCRINNGGCQDLCLLTHQGHVNCSCRGGRILQEDFTCRAVNSSCRAQDEFECANGECISFSLTCDGVSHCKDKSDEKPSYCNSRRCKKTFRQCNNGRCVSNMLWCNGVDDCGDGSDEIPCNKTACGVGEFRCRDGSCIGNSSRCNQFVDCEDASDEMNCSATDCSSYFRLGVKGVLFQPCERTSLCYAPSWVCDGANDCGDYSDERDCPGVKRPRCPLNYFACPSGRCIPMSWTCDKEDDCENGEDETHCNKFCSEAQFECQNHRCISKQWLCDGSDDCGDGSDEAAHCEGKTCGPSSFSCPGTHVCVPERWLCDGDKDCTDGADESVTAGCLYNSTCDDREFMCQNRLCIPKHFVCDHDRDCADGSDESPECEYPTCGPNEFRCANGRCLSSRQWECDGENDCHDHSDEAPKNPHCTSPEHKCNASSQFLCSSGRCVAEALLCNGQDDCGDGSDERGCHVNECLSRKLSGCSQDCEDLKIGFKCRCRPGFRLKDDGRTCADLDECSTTFPCSQLCINTHGSYKCLCVEGYAPRGGDPHSCKAVTDEEPFLIFANRYYLRKLNLDGSNYTLLKQGLNNAVALDFDYREQMIYWTDVTTQGSMIRRMHLNGSNVQVLHRTGLSNPDGLAVDWVGGNLYWCDKGRDTIEVSKLNGAYRTVLVSSGLREPRALVVDVQNGYLYWTDWGDHSLIGRIGMDGSGRSIIVDTKITWPNGLTVDYVTERIYWADAREDYIEFASLDGSNRHVVLSQDIPHIFALTLFEDYVYWTDWETKSINRAHKTTGANKTLLISTLHRPMDLHVFHALRQPDVPNHPCKVNNGGCSNLCLLSPGGGHKCACPTNFYLGGDGRTCVSNCTASQFVCKNDKCIPFWWKCDTEDDCGDHSDEPPDCPEFKCRPGQFQCSTGICTNPAFICDGDNDCQDNSDEANCDIHVCLPSQFKCTNTNRCIPGIFRCNGQDNCGDGEDERDCPEVTCAPNQFQCSITKRCIPRVWVCDRDNDCVDGSDEPANCTQMTCGVDEFRCKDSGRCIPARWKCDGEDDCGDGSDEPKEECDERTCEPYQFRCKNNRCVPGRWQCDYDNDCGDNSDEESCTPRPCSESEFSCANGRCIAGRWKCDGDHDCADGSDEKDCTPRCDMDQFQCKSGHCIPLRWRCDADADCMDGSDEEACGTGVRTCPLDEFQCNNTLCKPLAWKCDGEDDCGDNSDENPEECARFICPPNRPFRCKNDRVCLWIGRQCDGVDNCGDGTDEEDCEPPTAQNPHCKDKKEFLCRNQRCLSSSLRCNMFDDCGDGSDEEDCSIDPKLTSCATNASMCGDEARCVRTEKAAYCACRSGFHTVPGQPGCQDINECLRFGTCSQLCNNTKGGHLCSCARNFMKTHNTCKAEGSEYQVLYIADDNEIRSLFPGHPHSAYEQTFQGDESVRIDAMDVHVKAGRVYWTNWHTGTISYRSLPPAAPPTTSNRHRRQIDRGVTHLNISGLKMPRGIAIDWVAGNVYWTDSGRDVIEVAQMKGENRKTLISGMIDEPHAIVVDPLRGTMYWSDWGNHPKIETAAMDGTLRETLVQDNIQWPTGLAVDYHNERLYWADAKLSVIGSIRLNGTDPIVAADSKRGLSHPFSIDVFEDYIYGVTYINNRVFKIHKFGHSPLINLTGGLSHASDVVLYHQHKQPEVTNPCDRKKCEWLCLLSPSGPVCTCPNGKRLDNGTCVPVPSPTPPPDAPRPGTCTLQCFNGGSCFLNARRQPKCRCQPRYTGDKCELDQCWEYCHNGGTCAASPSGMPTCRCPTGFTGPKCTAQVCAGYCSNNSTCTVNQGNQPQCRCLPGFLGDRCQYRQCSGFCENFGTCQMAADGSRQCRCTVYFEGPRCEVNKCSRCLQGACVVNKQTGDVTCNCTDGRVAPSCLTCIDHCSNGGSCTMNSKMMPECQCPPHMTGPRCEEQVVSQQQPGHMASILIPLLLLLLLLLVAGVVFWYKRRVRGAKGFQHQRMTNGAMNVEIGNPTYKMYEGGEPDDVGGLLDADFALDPDKPTNFTNPVYATLYMGGHGSRHSLASTDEKRELLGRGPEDEIGDPLA.

The first 19 residues, 1–19 (MLTPPLLLLLPLLSALVSG), serve as a signal peptide directing secretion. Residues 20–4424 (ATMDAPKTCS…SQQQPGHMAS (4405 aa)) are Extracellular-facing. LDL-receptor class A domains lie at 26-67 (KTCS…ICPQ) and 71-111 (QRCP…HCRE). Intrachain disulfides connect C28–C41, C35–C54, C48–C65, C73–C86, C80–C99, and C93–C109. An EGF-like 1 domain is found at 112 to 150 (LRANCSRMGCQHHCVPTPSGPTCYCNSSFQLQADGKTCK). N115 carries an N-linked (GlcNAc...) asparagine glycan. Disulfide bonds link C116/C125, C121/C134, C136/C149, C155/C165, C161/C174, and C176/C189. N-linked (GlcNAc...) asparagine glycosylation occurs at N137. One can recognise an EGF-like 2; calcium-binding domain in the interval 151-190 (DFDECSVYGTCSQLCTNTDGSFTCGCVEGYLLQPDNRSCK). 3 N-linked (GlcNAc...) asparagine glycosylation sites follow: N186, N240, and N275. 3 LDL-receptor class B repeats span residues 293–335 (GNFY…DPAM), 336–379 (GKVF…DLVS), and 380–423 (RLVY…FENY). N-linked (GlcNAc...) asparagine glycosylation is present at N358. N447 carries N-linked (GlcNAc...) asparagine glycosylation. One can recognise an EGF-like 3 domain in the interval 475 to 521 (RSHACENDQYGKPGGCSDICLLANSHKARTCRCRSGFSLGSDGKSCK). 3 disulfide bridges follow: C479/C494, C490/C505, and C507/C520. LDL-receptor class B repeat units lie at residues 572-614 (GFIY…DWMG), 615-660 (DNLY…DPLN), 661-711 (GWMY…DIPA), and 712-755 (GRLY…HGNY). A glycan (N-linked (GlcNAc...) asparagine) is linked at N730. The EGF-like 4 domain occupies 804-844 (GTNKCRVNNGGCSSLCLATPGSRQCACAEDQVLDTDGVTCL). Cystine bridges form between C808–C819, C815–C828, C830–C843, C855–C867, C862–C880, C874–C891, C896–C908, C903–C921, C915–C932, C937–C949, C944–C962, C956–C972, C977–C990, C985–C1003, C997–C1012, C1016–C1028, C1023–C1041, C1035–C1052, C1063–C1076, C1070–C1089, C1083–C1098, C1105–C1119, C1113–C1132, C1126–C1141, C1146–C1160, C1153–C1173, C1167–C1183, C1186–C1197, C1193–C1207, C1209–C1222, C1228–C1238, C1234–C1247, and C1249–C1262. 8 LDL-receptor class A domains span residues 853–893 (PQCQ…LCHQ), 894–934 (HTCP…TCSA), 935–974 (RTCP…SCAY), 975–1014 (PTCF…GCSH), 1014–1054 (HSCS…NCTN), 1061–1100 (GGCH…SCEG), 1103–1143 (HVCD…NCEA), and 1144–1183 (LACR…GELC). Ca(2+)-binding residues include W872, D875, D877, D879, D885, and E886. An N-linked (GlcNAc...) asparagine glycan is attached at N929. Ca(2+)-binding residues include W1033, D1036, D1038, D1040, D1046, and E1047. N1051 carries N-linked (GlcNAc...) asparagine glycosylation. Residues W1081, D1084, D1086, D1088, D1094, and E1095 each contribute to the Ca(2+) site. Residues N1155 and N1156 are each glycosylated (N-linked (GlcNAc...) asparagine). EGF-like domains lie at 1184 to 1223 (DQCS…HTCQ) and 1224 to 1263 (IQSY…ESCR). Residues N1196 and N1219 are each glycosylated (N-linked (GlcNAc...) asparagine). LDL-receptor class B repeat units follow at residues 1310–1356 (SALY…DWIA), 1357–1399 (GNIY…DPRD), 1400–1446 (GILF…DYLE), 1447–1491 (KRIL…YGGE), and 1492–1532 (VYWT…YHPS). An N-linked (GlcNAc...) asparagine glycan is attached at N1512. An EGF-like 7 domain is found at 1537–1580 (APNPCEANGGRGPCSHLCLINYNRTVSCACPHLMKLHKDNTTCY). 3 disulfide bridges follow: C1541-C1554, C1550-C1564, and C1566-C1579. 4 N-linked (GlcNAc...) asparagine glycosylation sites follow: N1559, N1576, N1617, and N1646. 4 LDL-receptor class B repeats span residues 1628-1670 (QRVY…DWVS), 1671-1714 (RNLF…HPLR), 1715-1754 (GKLY…DFPE), and 1755-1799 (SKLY…MGDK). N-linked (GlcNAc...) asparagine glycans are attached at residues N1724, N1734, N1764, and N1826. Residues 1847–1888 (GTNPCSVNNGDCSQLCLPTSETTRSCMCTAGYSLRSGQQACE) enclose the EGF-like 8 domain. 3 disulfide bridges follow: C1851/C1862, C1858/C1872, and C1874/C1887. N1934 is a glycosylation site (N-linked (GlcNAc...) asparagine). LDL-receptor class B repeat units follow at residues 1935–1977 (DTIY…DWIA), 1978–2020 (GNIY…HPEK), 2021–2064 (GYLF…DYQG), and 2065–2108 (GKLY…FEDF). N-linked (GlcNAc...) asparagine glycosylation is present at N1996. An N6-acetyllysine modification is found at K2010. The N-linked (GlcNAc...) asparagine glycan is linked to N2049. Residues N2118 and N2128 are each glycosylated (N-linked (GlcNAc...) asparagine). Residues 2156–2196 (GTNVCAVANGGCQQLCLYRGGGQRACACAHGMLAEDGASCR) form the EGF-like 9 domain. 3 disulfides stabilise this stretch: C2160/C2171, C2167/C2181, and C2183/C2195. LDL-receptor class B repeat units lie at residues 2254-2295 (NRIF…HRGW), 2296-2344 (DTLY…DECQ), 2345-2389 (NLMF…DHRA), 2390-2432 (EKLY…YGEH), and 2433-2474 (IFWT…VAND). N2473 carries N-linked (GlcNAc...) asparagine glycosylation. The EGF-like 10 domain occupies 2479-2519 (ELSPCRINNGGCQDLCLLTHQGHVNCSCRGGRILQEDFTCR). Intrachain disulfides connect C2483–C2494, C2490–C2504, and C2506–C2518. N-linked (GlcNAc...) asparagine glycosylation is present at N2503. A glycan (N-linked (GlcNAc...) asparagine) is linked at N2522. 7 consecutive LDL-receptor class A domains span residues 2523–2564 (SSCR…YCNS), 2565–2603 (RRCK…PCNK), 2604–2642 (TACG…NCSA), 2643–2691 (TDCS…DCPG), 2695–2733 (PRCP…HCNK), 2733–2772 (KFCS…HCEG), and 2773–2815 (KTCG…GCLY). 6 disulfides stabilise this stretch: C2525–C2538, C2533–C2551, C2545–C2562, C2567–C2579, C2574–C2592, and C2586–C2601. The N-linked (GlcNAc...) asparagine glycan is linked to N2602. 15 disulfide bridges follow: C2606–C2618, C2613–C2631, C2625–C2640, C2645–C2667, C2661–C2680, C2674–C2689, C2697–C2709, C2704–C2722, C2716–C2731, C2735–C2747, C2742–C2760, C2754–C2770, C2775–C2788, C2782–C2801, and C2795–C2813. N-linked (GlcNAc...) asparagine glycans are attached at residues N2621 and N2639. N2816 carries N-linked (GlcNAc...) asparagine glycosylation. LDL-receptor class A domains are found at residues 2817–2856 (STCD…ECEY), 2857–2900 (PTCG…HCTS), and 2903–2941 (HKCN…RGCH). Intrachain disulfides connect C2819–C2831, C2826–C2844, C2838–C2854, C2859–C2871, C2866–C2885, C2879–C2898, C2905–C2918, C2913–C2931, C2925–C2940, C2945–C2957, C2953–C2966, C2968–C2981, C2987–C2997, C2993–C3006, and C3008–C3022. A glycan (N-linked (GlcNAc...) asparagine) is linked at N2906. One can recognise an EGF-like 11 domain in the interval 2942–2982 (VNECLSRKLSGCSQDCEDLKIGFKCRCRPGFRLKDDGRTCA). An EGF-like 12; calcium-binding domain is found at 2983-3023 (DLDECSTTFPCSQLCINTHGSYKCLCVEGYAPRGGDPHSCK). N-linked (GlcNAc...) asparagine glycosylation is found at N3049 and N3090. LDL-receptor class B repeat units lie at residues 3070–3114 (QMIY…DWVG), 3115–3157 (GNLY…DVQN), 3158–3201 (GYLY…DYVT), 3202–3244 (ERIY…FEDY), and 3245–3285 (VYWT…FHAL). N3265 is a glycosylation site (N-linked (GlcNAc...) asparagine). The 42-residue stretch at 3291–3332 (PNHPCKVNNGGCSNLCLLSPGGGHKCACPTNFYLGGDGRTCV) folds into the EGF-like 13 domain. 3 cysteine pairs are disulfide-bonded: C3295–C3306, C3302–C3316, and C3318–C3331. LDL-receptor class A domains lie at 3333–3372 (SNCT…DCPE), 3373–3411 (FKCR…NCDI), 3412–3451 (HVCL…DCPE), 3452–3492 (VTCA…NCTQ), 3493–3534 (MTCG…ECDE), 3535–3573 (RTCE…SCTP), 3574–3612 (RPCS…DCTP), 3612–3650 (PRCD…ACGT), 3653–3693 (RTCP…ECAR), 3694–3734 (FICP…DCEP), and 3740–3779 (PHCK…DCSI). A glycan (N-linked (GlcNAc...) asparagine) is linked at N3334. Disulfide bonds link C3335–C3347, C3342–C3360, C3354–C3370, C3375–C3387, C3382–C3400, C3394–C3409, C3414–C3427, C3421–C3440, C3434–C3449, C3454–C3467, C3461–C3480, C3474–C3490, C3495–C3508, C3502–C3521, C3515–C3532, C3537–C3549, C3544–C3562, C3556–C3571, C3576–C3588, C3583–C3601, C3595–C3610, C3614–C3626, C3621–C3639, C3633–C3648, C3655–C3667, C3662–C3680, C3674–C3691, C3696–C3710, C3704–C3723, C3717–C3732, C3742–C3755, C3750–C3768, C3762–C3777, C3786–C3799, C3793–C3808, C3810–C3823, C3829–C3839, C3835–C3848, and C3850–C3861. The N-linked (GlcNAc...) asparagine glycan is linked to N3489. N3663 carries N-linked (GlcNAc...) asparagine glycosylation. EGF-like domains lie at 3782 to 3824 (KLTS…PGCQ) and 3825 to 3862 (DINE…NTCK). N3789 carries N-linked (GlcNAc...) asparagine glycosylation. N3840 is a glycosylation site (N-linked (GlcNAc...) asparagine). 4 LDL-receptor class B repeats span residues 3913-3955 (GRVY…HLNI), 3971-4013 (GNVY…DPLR), 4014-4057 (GTMY…DYHN), and 4058-4102 (ERLY…FEDY). The short motif at 3941–3944 (RHRR) is the Recognition site for proteolytical processing element. N-linked (GlcNAc...) asparagine glycosylation occurs at N3954. N-linked (GlcNAc...) asparagine glycans are attached at residues N4076 and N4126. EGF-like domains lie at 4148–4184 (VTNP…GTCV), 4197–4233 (RPGT…DKCE), 4233–4269 (ELDQ…PKCT), 4269–4305 (TAQV…DRCQ), 4305–4341 (QYRQ…PRCE), 4341–4376 (EVNK…PSCL), and 4374–4410 (SCLT…PRCE). Disulfide bonds link C4152–C4161, C4157–C4170, C4172–C4183, C4201–C4211, C4205–C4221, C4223–C4232, C4237–C4247, C4241–C4257, C4259–C4268, C4273–C4283, C4277–C4293, C4295–C4304, C4309–C4319, C4313–C4329, C4331–C4340, C4345–C4353, and C4348–C4364. A glycan (N-linked (GlcNAc...) asparagine) is linked at N4180. N-linked (GlcNAc...) asparagine glycosylation is found at N4279 and N4280. N4365 carries N-linked (GlcNAc...) asparagine glycosylation. 4 cysteine pairs are disulfide-bonded: C4366–C4375, C4378–C4388, C4382–C4398, and C4400–C4409. The chain crosses the membrane as a helical span at residues 4425–4445 (ILIPLLLLLLLLLVAGVVFWY). At 4446–4545 (KRRVRGAKGF…PEDEIGDPLA (100 aa)) the chain is on the cytoplasmic side. Positions 4446-4545 (KRRVRGAKGF…PEDEIGDPLA (100 aa)) are interaction with MAFB. T4461 is subject to Phosphothreonine. Residues 4503–4508 (FTNPVY) carry the NPXY motif motif. Y4508 bears the Phosphotyrosine mark. 3 positions are modified to phosphoserine: S4518, S4521, and S4524.

The protein belongs to the LDLR family. As to quaternary structure, heterodimer of an 85-kDa membrane-bound carboxyl subunit and a non-covalently attached 515-kDa N-terminal subunit. Intracellular domain interacts with MAFB. Found in a complex with PID1/PCLI1, LRP1 and CUBNI. Interacts with SNX17, PID1/PCLI1, PDGF and CUBN. The intracellular domain interacts with SHC1, GULP1 and DAB1. Can weakly interact (via NPXY motif) with DAB2 (via PID domain); the interaction is enhanced by tyrosine phosphorylation of the NPXY motif. Interacts with MDK; promotes neuronal survival. Interacts with LRPAP1; this interaction is followed by rapid internalization. Interacts with uPA/PLAU and PAI1/SERPINE1, either individually or in complex with each other, leading to rapid endocytosis; this interaction is abolished in the presence of LRPAP1/RAP. Also interacts with tPA/PLAT alone or in complex with SERPINE1. Interacts with the urokinase receptor PLAUR; this interaction leads to PLAUR internalization and is impaired in the presence of SORL1. Interacts with PDGFB. Interacts with TAU/MAPT, leading to endocytosis; this interaction is reduced in the presence of LRPAP1/RAP. Interacts with IGFBP3. Interacts with ADGRG6. Phosphorylated on serine and threonine residues. In terms of processing, phosphorylated on tyrosine residues upon stimulation with PDGF. Tyrosine phosphorylation promotes interaction with SHC1. Post-translationally, cleaved into a 85 kDa membrane-spanning subunit (LRP-85) and a 515 kDa large extracellular domain (LRP-515) that remains non-covalently associated. Gamma-secretase-dependent cleavage of LRP-85 releases the intracellular domain from the membrane.

It is found in the cell membrane. The protein localises to the membrane. The protein resides in the coated pit. It localises to the golgi outpost. Its subcellular location is the cytoplasm. It is found in the cytoskeleton. The protein localises to the microtubule organizing center. The protein resides in the nucleus. Its function is as follows. Endocytic receptor involved in endocytosis and in phagocytosis of apoptotic cells. Required for early embryonic development. Involved in cellular lipid homeostasis. Involved in the plasma clearance of chylomicron remnants and activated LRPAP1 (alpha 2-macroglobulin), as well as the local metabolism of complexes between plasminogen activators and their endogenous inhibitors. Acts as an alpha-2-macroglobulin receptor. Acts as a TAU/MAPT receptor and controls the endocytosis of TAU/MAPT as well as its subsequent spread. May modulate cellular events, such as APP metabolism, kinase-dependent intracellular signaling, neuronal calcium signaling as well as neurotransmission. Also acts as a receptor for IGFBP3 to mediate cell growth inhibition. Functionally, (Microbial infection) Functions as a receptor for Vibrio cholerae cholix toxin and for Pseudomonas aeruginosa exotoxin A. The protein is Prolow-density lipoprotein receptor-related protein 1 of Mus musculus (Mouse).